The following is a 198-amino-acid chain: Auxin-binding protein 1 (198 aa).

Residues methionine 1 to glycine 33 form the signal peptide. A disulfide bridge links cysteine 36 with cysteine 189. 3 residues coordinate Zn(2+): histidine 92, histidine 94, and glutamate 98. A glycan (N-linked (GlcNAc...) asparagine) is linked at asparagine 130. Residue histidine 141 participates in Zn(2+) binding. The Prevents secretion from ER signature appears at lysine 195–leucine 198.

As to quaternary structure, homodimer. May interact with the GPI-anchored plasma membrane protein SKU5 and its family members. Interacts with TMK1 (via extracellular domain). In terms of processing, glycosylated. Ubiquitinated by RMA2, leading to proteasomal degradation.

The protein resides in the endoplasmic reticulum lumen. It localises to the cell membrane. Auxin receptor that controls cell elongation and cell division. Involved in embryonic morphogenesis. Acts on the cell cycle, endocycle, cell plate formation, and cell expansion and contributes to the control of auxin-related gene expression. Controls root meristem size and mediates auxin responsiveness. Involved in activation of ROP GTPases in response to auxin and regulation of clathrin-mediated endocytosis in roots. Acts as a positive factor in clathrin recruitment to the plasma membrane, thereby promoting endocytosis. Upon auxin binding, restricts the internalization of PIN proteins by inhibiting clathrin-mediated endocytosis. Promotes auxin-triggered phosphorylation status modulation of RAF-like kinases (e.g. RAF20 and RAF24). Involved in the regulation of polar auxin transport. Behaves as a negative regulator of the SCF(TIR1/AFB) signaling pathway, protecting AUX/IAA repressors from degradation. Regulates the expression of cell wall remodeling genes via an SCF(TIR1/AFB)-dependent pathway. Involved in the modulation of hemicellulose xyloglucan structure. Required for rapid auxin-mediated re-orientation of microtubules to regulate cell elongation in roots and dark-grown hypocotyls as well as asymmetric growth during gravitropic responses. Involved in the shade avoidance response. Forms with TMK1 a cell surface auxin perception complex that activates ROP signaling pathways. ABP1 sensing of auxin is important for the ABP1-TMK1 complex formation. Interacts functionally with phytochrome to regulate growth. The sequence is that of Auxin-binding protein 1 from Arabidopsis thaliana (Mouse-ear cress).